A 258-amino-acid polypeptide reads, in one-letter code: MPIEAVAVASLPMASRSAALCFSSAAAARSRSRSRHGRMAVSCDAGASDLLYSSLAAKLLGPPTSFDAGKLTVEFAHSHGNSSSGFPRAYTLTHCDFTANLTLAVSDTIAADRRLRADDVFAEWKQQQQQEGMALHVHCFVSGANLLHGLAAGFRYYVFSKELPLVLKAVVHGDALLFAEQPELLEAKVWVHFHSSSNAKYNRLECWGPLREAANAETTHKRHALEQLHNAITKGTRRRRRKWSSPDAIFSALLALLL.

It belongs to the staygreen family. Strongly expressed in leaves, stems and panicles, and at lower levels in roots and seeds.

In terms of biological role, promotes chlorophyll degradation in leaves. May be involved in LHCI proteins degradation, regulating the balance between LHCI and LHCII. In Oryza sativa subsp. japonica (Rice), this protein is Protein STAY-GREEN LIKE, chloroplastic.